A 301-amino-acid polypeptide reads, in one-letter code: Glycine--tRNA ligase alpha subunit (301 aa).

Belongs to the class-II aminoacyl-tRNA synthetase family. As to quaternary structure, tetramer of two alpha and two beta subunits.

The protein localises to the cytoplasm. It carries out the reaction tRNA(Gly) + glycine + ATP = glycyl-tRNA(Gly) + AMP + diphosphate. This is Glycine--tRNA ligase alpha subunit from Nitrosospira multiformis (strain ATCC 25196 / NCIMB 11849 / C 71).